A 463-amino-acid chain; its full sequence is Putative F-box protein At3g29830 (463 aa).

The F-box domain maps to 7–55 (RDRISSLPDVVLVMILSFLSFKDNVKTSILSKRWRNICYEAKNISFKES).

This is Putative F-box protein At3g29830 from Arabidopsis thaliana (Mouse-ear cress).